The chain runs to 507 residues: Maturase K (507 aa).

It belongs to the intron maturase 2 family. MatK subfamily.

It localises to the plastid. The protein localises to the chloroplast. In terms of biological role, usually encoded in the trnK tRNA gene intron. Probably assists in splicing its own and other chloroplast group II introns. This Craterostigma plantagineum (Blue gem) protein is Maturase K.